Consider the following 485-residue polypeptide: UDP-N-acetylmuramate--L-alanine ligase (485 aa).

129–135 (GTHGKTT) provides a ligand contact to ATP.

This sequence belongs to the MurCDEF family.

It is found in the cytoplasm. It carries out the reaction UDP-N-acetyl-alpha-D-muramate + L-alanine + ATP = UDP-N-acetyl-alpha-D-muramoyl-L-alanine + ADP + phosphate + H(+). It functions in the pathway cell wall biogenesis; peptidoglycan biosynthesis. In terms of biological role, cell wall formation. This Vibrio campbellii (strain ATCC BAA-1116) protein is UDP-N-acetylmuramate--L-alanine ligase.